A 385-amino-acid chain; its full sequence is DNA double-strand break repair protein Mre11 (385 aa).

Mn(2+)-binding residues include aspartate 14, histidine 16, and aspartate 58. Residue histidine 94 is the Proton donor of the active site. Mn(2+) contacts are provided by histidine 180, histidine 216, and histidine 218.

It belongs to the MRE11/RAD32 family. As to quaternary structure, homodimer. Forms a heterotetramer composed of two Mre11 subunits and two Rad50 subunits. Homodimerization facilitates DNA binding. Mn(2+) serves as cofactor.

Nuclease activity is regulated by Rad50. The mirin-derivative PFM39, specifically inhibits the 3'-5' exonuclease activity. The N-alkylated mirin-derivatives PFM03 and PFM01 specifically inhibit the endonuclease activity. In terms of biological role, part of the Rad50/Mre11 complex, which is involved in the early steps of DNA double-strand break (DSB) repair. The complex may facilitate opening of the processed DNA ends to aid in the recruitment of HerA and NurA. Mre11 binds to DSB ends and has both double-stranded 3'-5' exonuclease activity and single-stranded endonuclease activity. This is DNA double-strand break repair protein Mre11 from Thermotoga maritima (strain ATCC 43589 / DSM 3109 / JCM 10099 / NBRC 100826 / MSB8).